Here is a 220-residue protein sequence, read N- to C-terminus: UPF0319 protein YccT (220 aa).

A signal peptide spans 1–20 (MKTGALATFLALCLPATVFA).

The protein belongs to the UPF0319 family.

In Salmonella heidelberg (strain SL476), this protein is UPF0319 protein YccT.